A 423-amino-acid chain; its full sequence is Putative competence-damage inducible protein (423 aa).

It belongs to the CinA family.

This is Putative competence-damage inducible protein from Streptococcus uberis (strain ATCC BAA-854 / 0140J).